The following is a 61-amino-acid chain: Overexpressed in colon carcinoma 1 protein homolog (61 aa).

The span at 1-13 shows a compositional bias: polar residues; that stretch reads MGCGNSTAASTTP. Residues 1-61 are disordered; the sequence is MGCGNSTAAS…AGQTASTHKE (61 aa). Residues 18–34 show a composition bias toward basic and acidic residues; that stretch reads SAKDVQDDSSMDEEKRR. Polar residues predominate over residues 48-61; the sequence is TNETAGQTASTHKE.

This sequence belongs to the OCC1 family.

This Danio rerio (Zebrafish) protein is Overexpressed in colon carcinoma 1 protein homolog (si:dkey-261e22.4).